The sequence spans 542 residues: Probable myosin-binding protein 6 (542 aa).

Residues methionine 1–serine 21 form the signal peptide. A helical membrane pass occupies residues phenylalanine 39–isoleucine 59. The segment at serine 219–serine 239 is disordered. One can recognise a GTD-binding domain in the interval serine 300–arginine 398. Residues glycine 419–glutamate 480 are disordered. Positions alanine 437–serine 456 are enriched in polar residues. Positions aspartate 471–glutamate 480 are enriched in basic and acidic residues.

It localises to the membrane. Probable membrane-anchored myosin receptors. This chain is Probable myosin-binding protein 6, found in Arabidopsis thaliana (Mouse-ear cress).